The chain runs to 88 residues: Cell division topological specificity factor (88 aa).

The protein belongs to the MinE family.

Functionally, prevents the cell division inhibition by proteins MinC and MinD at internal division sites while permitting inhibition at polar sites. This ensures cell division at the proper site by restricting the formation of a division septum at the midpoint of the long axis of the cell. The polypeptide is Cell division topological specificity factor (Clostridium kluyveri (strain ATCC 8527 / DSM 555 / NBRC 12016 / NCIMB 10680 / K1)).